A 286-amino-acid chain; its full sequence is ATP synthase gamma chain (286 aa).

This sequence belongs to the ATPase gamma chain family. In terms of assembly, F-type ATPases have 2 components, CF(1) - the catalytic core - and CF(0) - the membrane proton channel. CF(1) has five subunits: alpha(3), beta(3), gamma(1), delta(1), epsilon(1). CF(0) has three main subunits: a, b and c.

The protein resides in the cell membrane. Its function is as follows. Produces ATP from ADP in the presence of a proton gradient across the membrane. The gamma chain is believed to be important in regulating ATPase activity and the flow of protons through the CF(0) complex. This Ureaplasma parvum serovar 3 (strain ATCC 27815 / 27 / NCTC 11736) protein is ATP synthase gamma chain.